Consider the following 262-residue polypeptide: 3-dehydro-D-guloside 4-epimerase (262 aa).

Glu-146 functions as the Proton donor/acceptor in the catalytic mechanism. Positions 146 and 179 each coordinate Mn(2+). A substrate-binding site is contributed by His-182. His-205 is a binding site for Mn(2+). A substrate-binding site is contributed by Arg-211. Residue Glu-240 is the Proton donor/acceptor of the active site. Glu-240 contacts Mn(2+).

This sequence belongs to the hyi family. The cofactor is Mn(2+).

The catalysed reaction is a 3-dehydro-D-guloside = a 3-dehydro-D-glucoside. Catalyzes the epimerization at C4 of 3-dehydro-D-gulosides leading to 3-dehydro-D-glucosides. Probably functions in a metabolic pathway that transforms D-gulosides to D-glucosides. Can use methyl alpha-3-dehydro-D-glucoside and methyl beta-3-dehydro-D-glucoside as substrates in vitro. However, the actual specific physiological substrates for this metabolic pathway are unknown. Cannot act on D-psicose, D-fructose, D-tagatose, D-sorbose, L-xylulose, or L-ribulose. In Escherichia coli (strain K12), this protein is 3-dehydro-D-guloside 4-epimerase (ycjR).